Consider the following 400-residue polypeptide: MGGWSSKPRQGMGTNLSVPNPLGFFPDHHLDPAFGANSNNPDWDFNPNKDHWPKANQVRAGAFGPGFTPPHCSLLGWSPQAQGILTTVPAAPPPASSNRQSGKQPTPISPPLRDSHPQAMQWNSTTFHQTLQDPRVRGLYFPAGGSSSGTVNPVPTTASPISSIFSRIGDPALNMENITSGFLGPLLVLQAGFFLLTRILTIPQSLDSWWTSLNFLGGTTVCLGQNSQSPISNHSPTSCPPTCPGYRWMCLRRFIIFLFILLLCLIFLLVLLDYQGMLPVCPLIPGSSTTSTGPCRTCTTPAQGTSMYPSCCCTKPSDGNCTCIPIPSSWAFGKFLWEWASARFSWLSLLVPFVQWFVGLSPTVWLSVIWMMWYWGPSLYSILSPFLPLLPIFFCLWVYI.

N-acetylmethionine is present on M1. Residue G2 is the site of N-myristoyl glycine; by host attachment. A pre-S1 region spans residues G2–A119. Positions G2–N174 are pre-S. Residues G2 to G181 lie on the Virion surface; in external conformation side of the membrane. Residues G2–R253 lie on the Intravirion; in internal conformation side of the membrane. An N-linked (GlcNAc...) asparagine glycan is attached at W4. The disordered stretch occupies residues L85 to Q118. A compositionally biased stretch (polar residues) spans S96 to T106. A pre-S2 region spans residues M120–N174. Residues F182–I202 traverse the membrane as a helical segment. Residues P203 to R253 are Intravirion; in external conformation-facing. The helical transmembrane segment at F254–Y274 threads the bilayer. Residues Q275 to S348 are Virion surface-facing. Residue N320 is glycosylated (N-linked (GlcNAc...) asparagine; by host). A helical membrane pass occupies residues L349–I369. Topologically, residues W370–W375 are intravirion. The chain crosses the membrane as a helical span at residues G376 to V398. Over Y399–I400 the chain is Virion surface.

This sequence belongs to the orthohepadnavirus major surface antigen family. In its internal form (Li-HBsAg), interacts with the capsid protein and with the isoform S. Interacts with host chaperone CANX. In terms of assembly, associates with host chaperone CANX through its pre-S2 N glycan; this association may be essential for isoform M proper secretion. As to quaternary structure, interacts with isoform L. Interacts with the antigens of satellite virus HDV (HDVAgs); this interaction is required for encapsidation of HDV genomic RNA. Isoform M is N-terminally acetylated by host at a ratio of 90%, and N-glycosylated by host at the pre-S2 region. Post-translationally, myristoylated.

The protein localises to the virion membrane. Functionally, the large envelope protein exists in two topological conformations, one which is termed 'external' or Le-HBsAg and the other 'internal' or Li-HBsAg. In its external conformation the protein attaches the virus to cell receptors and thereby initiating infection. This interaction determines the species specificity and liver tropism. This attachment induces virion internalization predominantly through caveolin-mediated endocytosis. The large envelope protein also assures fusion between virion membrane and endosomal membrane. In its internal conformation the protein plays a role in virion morphogenesis and mediates the contact with the nucleocapsid like a matrix protein. In terms of biological role, the middle envelope protein plays an important role in the budding of the virion. It is involved in the induction of budding in a nucleocapsid independent way. In this process the majority of envelope proteins bud to form subviral lipoprotein particles of 22 nm of diameter that do not contain a nucleocapsid. The polypeptide is Large envelope protein (Homo sapiens (Human)).